A 432-amino-acid chain; its full sequence is Enolase (432 aa).

Glutamine 163 is a (2R)-2-phosphoglycerate binding site. The active-site Proton donor is glutamate 205. Aspartate 242, glutamate 288, and aspartate 315 together coordinate Mg(2+). Lysine 340, arginine 369, serine 370, and lysine 391 together coordinate (2R)-2-phosphoglycerate. The Proton acceptor role is filled by lysine 340.

The protein belongs to the enolase family. Mg(2+) is required as a cofactor.

It localises to the cytoplasm. The protein localises to the secreted. It is found in the cell surface. The enzyme catalyses (2R)-2-phosphoglycerate = phosphoenolpyruvate + H2O. It participates in carbohydrate degradation; glycolysis; pyruvate from D-glyceraldehyde 3-phosphate: step 4/5. Catalyzes the reversible conversion of 2-phosphoglycerate (2-PG) into phosphoenolpyruvate (PEP). It is essential for the degradation of carbohydrates via glycolysis. The protein is Enolase of Enterococcus faecalis (strain ATCC 700802 / V583).